The sequence spans 499 residues: Gamma-aminobutyric acid receptor subunit beta (499 aa).

An N-terminal signal peptide occupies residues 1 to 23 (MWGIIVPFFSASLMCSLVAVVRC). At 24–251 (QQDTDHFANV…IFQLQRNIGY (228 aa)) the chain is on the extracellular side. Asparagine 32, asparagine 98, asparagine 106, and asparagine 152 each carry an N-linked (GlcNAc...) asparagine glycan. The cysteines at positions 167 and 181 are disulfide-linked. 3 consecutive transmembrane segments (helical) span residues 252–273 (FIFQ…SFWI), 278–299 (TSAR…SNGV), and 311–333 (AIDI…YAAV). At 334 to 475 (NYTYWGARAK…RVQDVNTIDK (142 aa)) the chain is on the cytoplasmic side. A helical transmembrane segment spans residues 476-499 (YARLMFPLLFIIFNTSYWSVYLLT).

The protein belongs to the ligand-gated ion channel (TC 1.A.9) family. Gamma-aminobutyric acid receptor (TC 1.A.9.5) subfamily. Generally pentameric. There are five types of GABA(A) receptor chains: alpha, beta, gamma, delta, and rho.

The protein localises to the postsynaptic cell membrane. Its subcellular location is the cell membrane. GABA, an inhibitory neurotransmitter, mediates neuronal inhibition by binding to the GABA/benzodiazepine receptor and opening an integral chloride channel. This is Gamma-aminobutyric acid receptor subunit beta from Lymnaea stagnalis (Great pond snail).